A 282-amino-acid polypeptide reads, in one-letter code: Protoheme IX farnesyltransferase (282 aa).

The next 8 helical transmembrane spans lie at Leu-40–Val-60, Ala-87–Pro-107, Tyr-108–Leu-128, Ser-135–Gly-157, Gly-162–Tyr-184, Ala-204–Phe-224, Leu-228–Leu-248, and Ala-261–Leu-281.

The protein belongs to the UbiA prenyltransferase family. Protoheme IX farnesyltransferase subfamily.

The protein localises to the cell membrane. It catalyses the reaction heme b + (2E,6E)-farnesyl diphosphate + H2O = Fe(II)-heme o + diphosphate. It participates in porphyrin-containing compound metabolism; heme O biosynthesis; heme O from protoheme: step 1/1. Its function is as follows. Converts heme B (protoheme IX) to heme O by substitution of the vinyl group on carbon 2 of heme B porphyrin ring with a hydroxyethyl farnesyl side group. The sequence is that of Protoheme IX farnesyltransferase from Thermofilum pendens (strain DSM 2475 / Hrk 5).